The sequence spans 917 residues: Hexokinase HKDC1 (917 aa).

The interval 1–20 (MFAVHLMAFYFSKLKEDQIK) is mitochondrial-binding peptide (MBP). Hexokinase domains follow at residues 16–458 (EDQI…MVTA) and 464–905 (QAQR…LITA). Residues arginine 30 and 84 to 89 (DLGGSK) each bind ATP. The hexokinase small subdomain 1 stretch occupies residues 73–207 (DGSENGEFLS…DMDVDILALV (135 aa)). 84–91 (DLGGSKFR) provides a ligand contact to D-glucose 6-phosphate. D-glucose is bound by residues serine 155, 172–173 (TK), and 208–209 (ND). A hexokinase large subdomain 1 region spans residues 208–447 (NDTVGTMMTC…CDVRFLLSES (240 aa)). Aspartate 209 and threonine 232 together coordinate D-glucose 6-phosphate. Residues asparagine 235, glutamate 260, and 291 to 294 (QLFE) each bind D-glucose. Residue 413–415 (DGT) participates in D-glucose 6-phosphate binding. 425–426 (KR) contacts ATP. D-glucose 6-phosphate-binding positions include serine 449 and 532-536 (DLGGT). A hexokinase small subdomain 2 region spans residues 521-654 (DGTEKGKFLA…EFDLDIVAVV (134 aa)). Residue 532-537 (DLGGTN) coordinates ATP. Residues 602 to 603 (SF), 619 to 620 (TK), and 655 to 656 (ND) contribute to the D-glucose site. Positions 655–894 (NDTVGTMMTC…CDVTFMLSED (240 aa)) are hexokinase large subdomain 2. The D-glucose 6-phosphate site is built by aspartate 656 and threonine 679. Residue threonine 679 participates in ATP binding. D-glucose contacts are provided by residues 681-682 (SN), glutamate 707, and glutamate 741. ATP-binding positions include 746–747 (GM), 783–787 (TKFLS), and 862–866 (TLYKL). D-glucose 6-phosphate-binding positions include 860 to 862 (DGT) and serine 896.

This sequence belongs to the hexokinase family. As to expression, widely expressed. Highly expressed in the brush border, surface epithelium and the myenteric plexus of the small and large intestines; the acinar centrocytes and interlobular ducts of the pancreas; and the alveolar macrophages in the lungs (at protein level). Present at moderate level in the thyroid follicular epithelium (at protein level).

Its subcellular location is the cytoplasm. The protein resides in the mitochondrion membrane. It is found in the photoreceptor inner segment. It catalyses the reaction a D-hexose + ATP = a D-hexose 6-phosphate + ADP + H(+). The catalysed reaction is D-glucose + ATP = D-glucose 6-phosphate + ADP + H(+). Its pathway is carbohydrate metabolism; hexose metabolism. The protein operates within carbohydrate degradation; glycolysis; D-glyceraldehyde 3-phosphate and glycerone phosphate from D-glucose: step 1/4. Catalyzes the phosphorylation of hexose to hexose 6-phosphate, although at very low level compared to other hexokinases. Has low glucose phosphorylating activity compared to other hexokinases. Involved in glucose homeostasis and hepatic lipid accumulation. Required to maintain whole-body glucose homeostasis during pregnancy; however additional evidences are required to confirm this role. The polypeptide is Hexokinase HKDC1 (Homo sapiens (Human)).